The primary structure comprises 188 residues: Peptidyl-tRNA hydrolase (188 aa).

Y14 is a binding site for tRNA. H19 acts as the Proton acceptor in catalysis. Residues Y64, N66, and N112 each coordinate tRNA.

Belongs to the PTH family. Monomer.

Its subcellular location is the cytoplasm. The enzyme catalyses an N-acyl-L-alpha-aminoacyl-tRNA + H2O = an N-acyl-L-amino acid + a tRNA + H(+). Hydrolyzes ribosome-free peptidyl-tRNAs (with 1 or more amino acids incorporated), which drop off the ribosome during protein synthesis, or as a result of ribosome stalling. Its function is as follows. Catalyzes the release of premature peptidyl moieties from peptidyl-tRNA molecules trapped in stalled 50S ribosomal subunits, and thus maintains levels of free tRNAs and 50S ribosomes. The protein is Peptidyl-tRNA hydrolase of Clostridium perfringens (strain ATCC 13124 / DSM 756 / JCM 1290 / NCIMB 6125 / NCTC 8237 / Type A).